A 142-amino-acid chain; its full sequence is uncharacterized protein (142 aa).

A helical membrane pass occupies residues 75–91 (YAAILAQVSFAFLCTGF).

It is found in the membrane. This is an uncharacterized protein from Haemophilus influenzae (strain ATCC 51907 / DSM 11121 / KW20 / Rd).